A 131-amino-acid chain; its full sequence is Small ribosomal subunit protein uS12c (131 aa).

This sequence belongs to the universal ribosomal protein uS12 family. As to quaternary structure, part of the 30S ribosomal subunit.

Its subcellular location is the plastid. The protein localises to the chloroplast. Functionally, with S4 and S5 plays an important role in translational accuracy. Located at the interface of the 30S and 50S subunits. In Stigeoclonium helveticum (Green alga), this protein is Small ribosomal subunit protein uS12c (rps12).